Consider the following 281-residue polypeptide: Probable splicing factor, arginine/serine-rich 2 (281 aa).

The RRM 1 domain maps to 2–72 (VRVYIGRLPN…ERVILEFPRR (71 aa)). 2 stretches are compositionally biased toward basic and acidic residues: residues 78 to 97 (EERSGSGFRGREPTFRKGGE) and 168 to 190 (KLQGEDLNGRKLKCTDETRDRSR). 2 disordered regions span residues 78–100 (EERSGSGFRGREPTFRKGGERQF) and 168–281 (KLQG…SASP). Residues 112–186 (FRLVIDNLST…RKLKCTDETR (75 aa)) enclose the RRM 2 domain. The span at 191-215 (SRSPRRRSRSRSPTRSRSPPARRRS) shows a compositional bias: basic residues. Positions 216-225 (PGSDRSDRKS) are enriched in basic and acidic residues. A compositionally biased stretch (basic residues) spans 245-254 (RSRSGGRRSR).

The protein belongs to the splicing factor SR family. Post-translationally, extensively phosphorylated on serine residues in the RS domain.

The protein resides in the nucleus. In terms of biological role, plays a functionally redundant role in spermatogenesis and growth rate control. Required for the development of somatic gonad structures and for progression from larval stage to adulthood. The chain is Probable splicing factor, arginine/serine-rich 2 (rsp-2) from Caenorhabditis elegans.